The primary structure comprises 420 residues: Tyrosine--tRNA ligase (420 aa).

Y38 serves as a coordination point for L-tyrosine. Positions P43–H52 match the 'HIGH' region motif. Y169 and Q173 together coordinate L-tyrosine. The 'KMSKS' region signature appears at K231–S235. ATP is bound at residue K234. The 67-residue stretch at K353 to I419 folds into the S4 RNA-binding domain.

It belongs to the class-I aminoacyl-tRNA synthetase family. TyrS type 1 subfamily. Homodimer.

It is found in the cytoplasm. The enzyme catalyses tRNA(Tyr) + L-tyrosine + ATP = L-tyrosyl-tRNA(Tyr) + AMP + diphosphate + H(+). Its function is as follows. Catalyzes the attachment of tyrosine to tRNA(Tyr) in a two-step reaction: tyrosine is first activated by ATP to form Tyr-AMP and then transferred to the acceptor end of tRNA(Tyr). The chain is Tyrosine--tRNA ligase from Lactobacillus helveticus (strain DPC 4571).